The sequence spans 719 residues: Polyribonucleotide nucleotidyltransferase (719 aa).

Aspartate 491 and aspartate 497 together coordinate Mg(2+). In terms of domain architecture, KH spans 558–617 (PRMLTIKINPEKIRDVIGKGGATIRALTEETGTQIDISDDGTIVIASVDEAQAKEAQRRI). The S1 motif domain occupies 627 to 695 (GQVYDGSVLR…DKGRLRLSVK (69 aa)).

This sequence belongs to the polyribonucleotide nucleotidyltransferase family. Mg(2+) serves as cofactor.

It localises to the cytoplasm. The enzyme catalyses RNA(n+1) + phosphate = RNA(n) + a ribonucleoside 5'-diphosphate. Involved in mRNA degradation. Catalyzes the phosphorolysis of single-stranded polyribonucleotides processively in the 3'- to 5'-direction. This is Polyribonucleotide nucleotidyltransferase from Bordetella petrii (strain ATCC BAA-461 / DSM 12804 / CCUG 43448).